The sequence spans 459 residues: tRNA modification GTPase MnmE (459 aa).

(6S)-5-formyl-5,6,7,8-tetrahydrofolate is bound by residues Arg-23, Glu-86, and Arg-125. Residues 221–380 (GLKTVIVGKP…LQDKIESMVY (160 aa)) form the TrmE-type G domain. Asn-231 provides a ligand contact to K(+). GTP is bound by residues 231 to 236 (NVGKSS), 250 to 256 (TDIPGTT), and 275 to 278 (DTAG). Ser-235 provides a ligand contact to Mg(2+). Thr-250, Ile-252, and Thr-255 together coordinate K(+). Position 256 (Thr-256) interacts with Mg(2+). Lys-459 is a binding site for (6S)-5-formyl-5,6,7,8-tetrahydrofolate.

This sequence belongs to the TRAFAC class TrmE-Era-EngA-EngB-Septin-like GTPase superfamily. TrmE GTPase family. In terms of assembly, homodimer. Heterotetramer of two MnmE and two MnmG subunits. It depends on K(+) as a cofactor.

The protein resides in the cytoplasm. Its function is as follows. Exhibits a very high intrinsic GTPase hydrolysis rate. Involved in the addition of a carboxymethylaminomethyl (cmnm) group at the wobble position (U34) of certain tRNAs, forming tRNA-cmnm(5)s(2)U34. This Clostridioides difficile (strain 630) (Peptoclostridium difficile) protein is tRNA modification GTPase MnmE.